The following is a 422-amino-acid chain: Serine protease HTRA2, mitochondrial (422 aa).

Residues 1-17 (MALRGSHRLEVIFKRCI) constitute a mitochondrion transit peptide. A propeptide spanning residues 18–74 (ASPVFHSHAANRRSSQLAIKGTDPSSNGNSGQDQQNGEQKAKGWRRLVRFFVPFSLG) is cleaved from the precursor. A compositionally biased stretch (polar residues) spans 29–55 (RRSSQLAIKGTDPSSNGNSGQDQQNGE). The segment at 29-56 (RRSSQLAIKGTDPSSNGNSGQDQQNGEQ) is disordered. A helical membrane pass occupies residues 64 to 82 (LVRFFVPFSLGAAVSAAVI). 2 consecutive short sequence motifs (IAP-binding) follow at residues 75-78 (AAVS) and 94-97 (SKMT). The interval 139–302 (SNGSGFIIEQ…IPIDYVKVFL (164 aa)) is serine protease. Catalysis depends on charge relay system residues His157, Asp189, and Ser266. The 86-residue stretch at 325–410 (MGITMLTLTP…NLDIVILRGV (86 aa)) folds into the PDZ domain.

The protein belongs to the peptidase S1C family. Interacts with th/DIAP1 (via BIR 2 domain).

The protein resides in the mitochondrion intermembrane space. The protein localises to the mitochondrion membrane. It carries out the reaction Cleavage of non-polar aliphatic amino-acids at the P1 position, with a preference for Val, Ile and Met. At the P2 and P3 positions, Arg is selected most strongly with a secondary preference for other hydrophilic residues.. Serine protease that shows proteolytic activity against a non-specific substrate beta-casein. Promotes or induces cell death either by direct binding to and inhibition of BIRC proteins (also called inhibitor of apoptosis proteins, IAPs), leading to an increase in caspase activity, or by a BIRC inhibition-independent, caspase-independent and serine protease activity-dependent mechanism. Can antagonize antiapoptotic activity of th/Diap1 by directly inducing the degradation of th/Diap1. The chain is Serine protease HTRA2, mitochondrial from Drosophila yakuba (Fruit fly).